Here is an 856-residue protein sequence, read N- to C-terminus: Leucine--tRNA ligase (856 aa).

The short motif at 53 to 63 is the 'HIGH' region element; the sequence is PYPSGNLHMGH. A 'KMSKS' region motif is present at residues 622–626; the sequence is KMSKS. Lys-625 is a binding site for ATP.

It belongs to the class-I aminoacyl-tRNA synthetase family.

The protein localises to the cytoplasm. The catalysed reaction is tRNA(Leu) + L-leucine + ATP = L-leucyl-tRNA(Leu) + AMP + diphosphate. The protein is Leucine--tRNA ligase of Prochlorococcus marinus (strain MIT 9312).